The chain runs to 198 residues: GTP cyclohydrolase-2 (198 aa).

Residue 52 to 56 (RMHSE) coordinates GTP. Zn(2+) contacts are provided by cysteine 57, cysteine 68, and cysteine 70. Residues glutamine 73, 94 to 96 (EGR), and threonine 116 contribute to the GTP site. The active-site Proton acceptor is the aspartate 128. Catalysis depends on arginine 130, which acts as the Nucleophile. GTP is bound by residues threonine 151 and lysine 156.

Belongs to the GTP cyclohydrolase II family. The cofactor is Zn(2+).

It carries out the reaction GTP + 4 H2O = 2,5-diamino-6-hydroxy-4-(5-phosphoribosylamino)-pyrimidine + formate + 2 phosphate + 3 H(+). The protein operates within cofactor biosynthesis; riboflavin biosynthesis; 5-amino-6-(D-ribitylamino)uracil from GTP: step 1/4. Its function is as follows. Catalyzes the conversion of GTP to 2,5-diamino-6-ribosylamino-4(3H)-pyrimidinone 5'-phosphate (DARP), formate and pyrophosphate. This is GTP cyclohydrolase-2 from Vibrio parahaemolyticus serotype O3:K6 (strain RIMD 2210633).